The following is a 185-amino-acid chain: Ribosome-recycling factor (185 aa).

The segment at 138 to 159 (KVKKLEKDKEISEDESKKAQEQ) is disordered.

This sequence belongs to the RRF family.

It is found in the cytoplasm. Functionally, responsible for the release of ribosomes from messenger RNA at the termination of protein biosynthesis. May increase the efficiency of translation by recycling ribosomes from one round of translation to another. The sequence is that of Ribosome-recycling factor from Helicobacter acinonychis (strain Sheeba).